Reading from the N-terminus, the 93-residue chain is Small ribosomal subunit protein uS19 (93 aa).

The protein belongs to the universal ribosomal protein uS19 family.

Protein S19 forms a complex with S13 that binds strongly to the 16S ribosomal RNA. The chain is Small ribosomal subunit protein uS19 (rpsS) from Mycobacterium leprae (strain TN).